The following is a 104-amino-acid chain: UPF0213 protein ORF82 (104 aa).

The GIY-YIG domain maps to 7–83; that stretch reads KVWCVYIVRR…KRKRGKYFKL (77 aa).

This sequence belongs to the UPF0213 family.

The sequence is that of UPF0213 protein ORF82 from Orgyia pseudotsugata (Douglas-fir tussock moth).